The primary structure comprises 145 residues: Arginine repressor (145 aa).

Belongs to the ArgR family.

Its subcellular location is the cytoplasm. The protein operates within amino-acid biosynthesis; L-arginine biosynthesis [regulation]. Functionally, regulates arginine biosynthesis genes. This Solibacter usitatus (strain Ellin6076) protein is Arginine repressor.